A 257-amino-acid polypeptide reads, in one-letter code: Isoprenyl transferase (257 aa).

Asp-37 is an active-site residue. Asp-37 provides a ligand contact to Mg(2+). Residues 38-41, Trp-42, Arg-50, His-54, and 82-84 each bind substrate; these read GNGR and STE. Asn-85 (proton acceptor) is an active-site residue. Residues Trp-86, Arg-88, Arg-205, and 211–213 contribute to the substrate site; that span reads RLS. A Mg(2+)-binding site is contributed by Glu-224.

The protein belongs to the UPP synthase family. As to quaternary structure, homodimer. Mg(2+) is required as a cofactor.

Its function is as follows. Catalyzes the condensation of isopentenyl diphosphate (IPP) with allylic pyrophosphates generating different type of terpenoids. The protein is Isoprenyl transferase of Shouchella clausii (strain KSM-K16) (Alkalihalobacillus clausii).